Reading from the N-terminus, the 407-residue chain is Actinorhodin polyketide putative beta-ketoacyl synthase 2 (407 aa).

One can recognise a Ketosynthase family 3 (KS3) domain in the interval 1-402; it reads MSVLITGVGV…GFNSAAVLRR (402 aa).

The protein belongs to the thiolase-like superfamily. Beta-ketoacyl-ACP synthases family.

This is Actinorhodin polyketide putative beta-ketoacyl synthase 2 from Streptomyces coelicolor (strain ATCC BAA-471 / A3(2) / M145).